We begin with the raw amino-acid sequence, 193 residues long: Flagellin B1 (193 aa).

A propeptide spanning residues 1–12 (MFEFITDEDERG) is cleaved from the precursor.

This sequence belongs to the archaeal flagellin family. Glycosylated.

It is found in the archaeal flagellum. In terms of biological role, flagellin is the subunit protein which polymerizes to form the filaments of archaeal flagella. The sequence is that of Flagellin B1 (flaB1) from Halobacterium salinarum (strain ATCC 700922 / JCM 11081 / NRC-1) (Halobacterium halobium).